We begin with the raw amino-acid sequence, 241 residues long: Major prion protein (241 aa).

Residues 1–15 (MLVLFVATWSDLGLC) form the signal peptide. Residues 16–31 (KKRPKPGGWNTGGSRY) form an interaction with ADGRG6 region. The segment at 16–223 (KKRPKPGGWN…ESQAYYQRGS (208 aa)) is interaction with GRB2, ERI3 and SYN1. Positions 18 to 100 (RPKPGGWNTG…QWNKPSKPKT (83 aa)) are disordered. 5 consecutive repeat copies span residues 44 to 52 (PQGGGSWGQ), 53 to 60 (PHGGGWGQ), 61 to 68 (PHGGGWGQ), 69 to 76 (PHGGGWGQ), and 77 to 84 (PHGGGWGQ). The tract at residues 44–84 (PQGGGSWGQPHGGGWGQPHGGGWGQPHGGGWGQPHGGGWGQ) is 5 X 8 AA tandem repeats of P-H-G-G-G-W-G-Q. The segment covering 45 to 88 (QGGGSWGQPHGGGWGQPHGGGWGQPHGGGWGQPHGGGWGQGGGT) has biased composition (gly residues). Residues histidine 54, glycine 55, glycine 56, histidine 62, glycine 63, glycine 64, histidine 70, glycine 71, glycine 72, histidine 78, glycine 79, and glycine 80 each contribute to the Cu(2+) site. Cysteines 172 and 207 form a disulfide. N-linked (GlcNAc...) asparagine glycans are attached at residues asparagine 174 and asparagine 190. Serine 223 is lipidated: GPI-anchor amidated serine. Positions 224-241 (SMVLFSSPPVILLISFLI) are cleaved as a propeptide — removed in mature form.

This sequence belongs to the prion family. As to quaternary structure, monomer and homodimer. Has a tendency to aggregate into amyloid fibrils containing a cross-beta spine, formed by a steric zipper of superposed beta-strands. Soluble oligomers may represent an intermediate stage on the path to fibril formation. Copper binding may promote oligomerization. Interacts with GRB2, APP, ERI3/PRNPIP and SYN1. Mislocalized cytosolically exposed PrP interacts with MGRN1; this interaction alters MGRN1 subcellular location and causes lysosomal enlargement. Interacts with APP. Interacts with KIAA1191. Interacts with ADGRG6.

It is found in the cell membrane. The protein resides in the golgi apparatus. Its primary physiological function is unclear. May play a role in neuronal development and synaptic plasticity. May be required for neuronal myelin sheath maintenance. May promote myelin homeostasis through acting as an agonist for ADGRG6 receptor. May play a role in iron uptake and iron homeostasis. Soluble oligomers are toxic to cultured neuroblastoma cells and induce apoptosis (in vitro). Association with GPC1 (via its heparan sulfate chains) targets PRNP to lipid rafts. Also provides Cu(2+) or Zn(2+) for the ascorbate-mediated GPC1 deaminase degradation of its heparan sulfate side chains. The protein is Major prion protein (PRNP) of Plecturocebus moloch (Dusky titi monkey).